The primary structure comprises 487 residues: Diacylglycerol kinase 4 (487 aa).

In terms of domain architecture, DAGKc spans 86–242 (TPEVPLMVFV…LDSWNILITM (157 aa)).

This sequence belongs to the eukaryotic diacylglycerol kinase family. Monomer. In terms of tissue distribution, highly expressed in pollen grains. Expressed in roots, hypocotyls, leaf vasculature, developing anthers and stigmas, and receptacles of siliques.

It is found in the endoplasmic reticulum. Its subcellular location is the cytoplasm. The protein localises to the cytosol. The catalysed reaction is a 1,2-diacyl-sn-glycerol + ATP = a 1,2-diacyl-sn-glycero-3-phosphate + ADP + H(+). Phosphorylates the second messenger diacylglycerol (DAG) to generate phosphatidic acid (PA), another important signaling molecule. PA is required for plant development and responses to abiotic stress and pathogen attack. May be involved in the accumulation of PA during cold stress. Involved in the regulation of PA and phosphatidylcholine biosynthesis in growing pollen tubes. Required for nitric oxide-dependent pollen tube growth and re-orientation responses. Functions together with DGK2 in male gametophyte development and biosynthesis of phosphatidylglycerol and phosphatidylinositol in the endoplasmic reticulum (ER). Involved in PA production for pollen grain growth, as well as leaf and root growth. Possesses guanylyl cyclase activity in vitro. The protein is Diacylglycerol kinase 4 of Arabidopsis thaliana (Mouse-ear cress).